The sequence spans 304 residues: Ribosomal RNA small subunit methyltransferase H (304 aa).

Residues 37–39, D57, F85, D100, and H107 contribute to the S-adenosyl-L-methionine site; that span reads GGH.

The protein belongs to the methyltransferase superfamily. RsmH family.

Its subcellular location is the cytoplasm. The catalysed reaction is cytidine(1402) in 16S rRNA + S-adenosyl-L-methionine = N(4)-methylcytidine(1402) in 16S rRNA + S-adenosyl-L-homocysteine + H(+). Functionally, specifically methylates the N4 position of cytidine in position 1402 (C1402) of 16S rRNA. The sequence is that of Ribosomal RNA small subunit methyltransferase H from Azobacteroides pseudotrichonymphae genomovar. CFP2.